The following is a 253-amino-acid chain: MNRITQKLQEDKKILSIYFSAGYPNLNDTVQIIQDLEKNGVDLIEIGLPFSDPLADGPTIQASSTQALHNGMTTQILFDQLQNIRESVKIPLIIMGYFNPMLQYGVEAFCKKCAEIGIDGLIIPDLPVDVYADEYKAIFEKYGLINVFLITPQTSDERIRFIDSVSNGFIYMVSSASVTGSQSGFGNVQETYFERISNLNLKNPQIVGFGISNKETFNQATKYAKGAIIGSAFIKHLSESGSGKIQEFVGEIR.

Residues glutamate 45 and aspartate 56 each act as proton acceptor in the active site.

It belongs to the TrpA family. Tetramer of two alpha and two beta chains.

It carries out the reaction (1S,2R)-1-C-(indol-3-yl)glycerol 3-phosphate + L-serine = D-glyceraldehyde 3-phosphate + L-tryptophan + H2O. Its pathway is amino-acid biosynthesis; L-tryptophan biosynthesis; L-tryptophan from chorismate: step 5/5. Functionally, the alpha subunit is responsible for the aldol cleavage of indoleglycerol phosphate to indole and glyceraldehyde 3-phosphate. This chain is Tryptophan synthase alpha chain, found in Flavobacterium johnsoniae (strain ATCC 17061 / DSM 2064 / JCM 8514 / BCRC 14874 / CCUG 350202 / NBRC 14942 / NCIMB 11054 / UW101) (Cytophaga johnsonae).